We begin with the raw amino-acid sequence, 39 residues long: Adipokinetic prohormone type 2 (39 aa).

Position 1 is a pyrrolidone carboxylic acid (glutamine 1). Tryptophan 8 is subject to Tryptophan amide.

It belongs to the AKH/HRTH/RPCH family. Adipokinetic hormone precursor-related peptide (APRP) can form three type of disulfide-bond dimers: p1 (alpha-alpha), p2 (alpha-beta), and p3 (beta-beta).

It localises to the secreted. In terms of biological role, this hormone, released from cells in the corpora cardiaca, causes release of diglycerides from the fat body and stimulation of muscles to use these diglycerides as an energy source during energy-demanding processes. This chain is Adipokinetic prohormone type 2, found in Schistocerca gregaria (Desert locust).